The primary structure comprises 409 residues: 8-amino-7-oxononanoate synthase (409 aa).

Position 20 (arginine 20) interacts with substrate. 116 to 117 is a pyridoxal 5'-phosphate binding site; that stretch reads GY. Histidine 141 is a substrate binding site. The pyridoxal 5'-phosphate site is built by serine 187, histidine 215, and threonine 243. The residue at position 246 (lysine 246) is an N6-(pyridoxal phosphate)lysine. A substrate-binding site is contributed by threonine 369.

This sequence belongs to the class-II pyridoxal-phosphate-dependent aminotransferase family. BioF subfamily. As to quaternary structure, homodimer. Pyridoxal 5'-phosphate serves as cofactor.

It carries out the reaction 6-carboxyhexanoyl-[ACP] + L-alanine + H(+) = (8S)-8-amino-7-oxononanoate + holo-[ACP] + CO2. It functions in the pathway cofactor biosynthesis; biotin biosynthesis. Its function is as follows. Catalyzes the decarboxylative condensation of pimeloyl-[acyl-carrier protein] and L-alanine to produce 8-amino-7-oxononanoate (AON), [acyl-carrier protein], and carbon dioxide. The protein is 8-amino-7-oxononanoate synthase of Polaromonas naphthalenivorans (strain CJ2).